The primary structure comprises 122 residues: MADSGGSSPWWKSLTRKKSKEVTVGVQPQVRPETGQEPSPPHSDRTSSLPENQHSNILGDPGESLRSDKLCEEKTGNSRRNLKISRSGRFKEKRKMRATLLPEGDKSPEEADFPDDPQEDKQ.

Residues 1 to 122 (MADSGGSSPW…FPDDPQEDKQ (122 aa)) form a disordered region. Position 39 is a phosphoserine (Ser39). A compositionally biased stretch (polar residues) spans 46–56 (TSSLPENQHSN). A compositionally biased stretch (basic and acidic residues) spans 63–76 (ESLRSDKLCEEKTG). A compositionally biased stretch (basic residues) spans 80 to 97 (RNLKISRSGRFKEKRKMR). Acidic residues predominate over residues 110-122 (EADFPDDPQEDKQ).

The protein belongs to the PRR15 family. In terms of tissue distribution, exhibits a cell type specific expression pattern only in the small and large intestine and in the testis. Along the intestinal tract expression is restricted to the non-proliferating epithelial cells surrounding the villi and no expression is found in the intestinal crypts, where proliferation occurs. In the testis, it is detected only in post-mitotic secondary spermatocytes.

In terms of biological role, may have a role in proliferation and/or differentiation. This chain is Proline-rich protein 15 (Prr15), found in Mus musculus (Mouse).